A 108-amino-acid polypeptide reads, in one-letter code: Phosphoribosyl-AMP cyclohydrolase (108 aa).

Asp-73 is a Mg(2+) binding site. Residue Cys-74 participates in Zn(2+) binding. Asp-75 and Asp-77 together coordinate Mg(2+). Residues Cys-90 and Cys-97 each contribute to the Zn(2+) site.

The protein belongs to the PRA-CH family. Homodimer. The cofactor is Mg(2+). Zn(2+) serves as cofactor.

It localises to the cytoplasm. The enzyme catalyses 1-(5-phospho-beta-D-ribosyl)-5'-AMP + H2O = 1-(5-phospho-beta-D-ribosyl)-5-[(5-phospho-beta-D-ribosylamino)methylideneamino]imidazole-4-carboxamide. The protein operates within amino-acid biosynthesis; L-histidine biosynthesis; L-histidine from 5-phospho-alpha-D-ribose 1-diphosphate: step 3/9. In terms of biological role, catalyzes the hydrolysis of the adenine ring of phosphoribosyl-AMP. In Lactiplantibacillus plantarum (strain ATCC BAA-793 / NCIMB 8826 / WCFS1) (Lactobacillus plantarum), this protein is Phosphoribosyl-AMP cyclohydrolase.